The chain runs to 187 residues: Small monomeric GTPase RhbA (187 aa).

Residues Ser-17, Val-18, Gly-19, Lys-20, Ser-21, Ser-22, Val-33, and Glu-34 each contribute to the GDP site. Ser-17 lines the GTP pocket. GTP contacts are provided by Gly-19, Lys-20, Ser-21, Ser-22, and Val-33. Ser-21 contacts Mg(2+). GTP contacts are provided by Tyr-36, Thr-39, Asn-120, Asp-123, and Ala-152. The Effector region signature appears at 36–44; sequence YYPTIENTF. Thr-39 contacts Mg(2+). GDP-binding residues include Asn-120, Asp-123, and Ala-152. The S-farnesyl cysteine moiety is linked to residue Cys-184.

The protein belongs to the small GTPase superfamily. Rheb family. In terms of processing, farnesylation is important for efficiently activating mTORC1-mediated signaling.

Its subcellular location is the cell membrane. It carries out the reaction GTP + H2O = GDP + phosphate + H(+). Its activity is regulated as follows. Alternates between an inactive form bound to GDP and an active form bound to GTP. Functionally, small GTPase that acts as an allosteric activator of the canonical TOR pathway, an evolutionarily conserved central nutrient sensor that stimulates anabolic reactions and macromolecule biosynthesis to promote cellular biomass generation and growth. Plays a role in virulence. The sequence is that of Small monomeric GTPase RhbA from Aspergillus fumigatus (strain ATCC MYA-4609 / CBS 101355 / FGSC A1100 / Af293) (Neosartorya fumigata).